We begin with the raw amino-acid sequence, 210 residues long: MEIPVYNASGEIIKNISISEDVFGVPFNEALVHQAFVAQQANARQGTQSTKTRGEVQGSSRKIYRQKGTGNARMGTNRSPVRRHGGVAFGPRPRDFSKDLPKKMRRQAIRCVLSFKLESGELKVVDQLSFDEPKTRDMAKILAALQVMSPTLIAVDNPDTNFIKSARNIPAVKTTPANLLNISDMLRNKQLVMTEEAVRQVEELWGQRSR.

Residues 41-51 (ANARQGTQSTK) are compositionally biased toward polar residues. 2 disordered regions span residues 41-60 (ANAR…QGSS) and 67-98 (KGTG…DFSK).

Belongs to the universal ribosomal protein uL4 family. As to quaternary structure, part of the 50S ribosomal subunit.

Its function is as follows. One of the primary rRNA binding proteins, this protein initially binds near the 5'-end of the 23S rRNA. It is important during the early stages of 50S assembly. It makes multiple contacts with different domains of the 23S rRNA in the assembled 50S subunit and ribosome. In terms of biological role, forms part of the polypeptide exit tunnel. The polypeptide is Large ribosomal subunit protein uL4 (Dehalococcoides mccartyi (strain ATCC BAA-2266 / KCTC 15142 / 195) (Dehalococcoides ethenogenes (strain 195))).